The chain runs to 293 residues: MTDTTRSLRDCLAPAKLNLFLHITGRRPDGYHALQSVFQLLDWGDRLHFTLRDDGKVSRVTDVPGVPEESDLVVRAASLLKAHAGATLGVDIEIDKRLPMGAGLGGGSSDAATTLLALNRLWRLDLPRTTLQSLAVKLGADVPFFVFGKNAFAEGIGEALQAVELPARWFLVVTPRVHVPTAAIFSEKSLTRDSKPITITDFLAQCGIDAGWPDSFGRNDMQPVVTSKYAEVAKVVEWFYNLTPARMTGSGASVFAAFKSKADAEAAQAKLPAGWNSAVAESMSEHPLFAFAS.

K16 is an active-site residue. 99–109 (PMGAGLGGGSS) provides a ligand contact to ATP. D141 is an active-site residue.

The protein belongs to the GHMP kinase family. IspE subfamily.

The enzyme catalyses 4-CDP-2-C-methyl-D-erythritol + ATP = 4-CDP-2-C-methyl-D-erythritol 2-phosphate + ADP + H(+). It participates in isoprenoid biosynthesis; isopentenyl diphosphate biosynthesis via DXP pathway; isopentenyl diphosphate from 1-deoxy-D-xylulose 5-phosphate: step 3/6. Functionally, catalyzes the phosphorylation of the position 2 hydroxy group of 4-diphosphocytidyl-2C-methyl-D-erythritol. The polypeptide is 4-diphosphocytidyl-2-C-methyl-D-erythritol kinase (Burkholderia pseudomallei (strain 668)).